Reading from the N-terminus, the 269-residue chain is UPF0162 protein BUsg_167 (269 aa).

It belongs to the UPF0162 family.

The protein is UPF0162 protein BUsg_167 of Buchnera aphidicola subsp. Schizaphis graminum (strain Sg).